We begin with the raw amino-acid sequence, 3644 residues long: Msx2-interacting protein (3644 aa).

A DNA-binding region spans residues 1–574; the sequence is MVRETRHLWV…DAQAAVKETK (574 aa). Positions 6–81 constitute an RRM 1 domain; the sequence is RHLWVGNLPE…RDLRTDYNEP (76 aa). Position 99 is a phosphoserine (S99). 3 disordered regions span residues 103-124, 170-209, and 225-331; these read EVSG…SLHA, YRDP…REQF, and TREV…EKDE. R108 carries the omega-N-methylarginine modification. S188 and S190 each carry phosphoserine. 2 stretches are compositionally biased toward basic and acidic residues: residues 192–207 and 225–237; these read NRFD…RARE and TREV…ERSY. A compositionally biased stretch (low complexity) spans 245–310; that stretch reads PHSSQSRNQS…TASDDSPARS (66 aa). S310 bears the Phosphoserine mark. 3 consecutive RRM domains span residues 336 to 416, 439 to 514, and 518 to 590; these read FGIK…VGPE, RTLF…FGKS, and NCVW…FANR. Residues 559-575 are a coiled coil; sequence LYSEIEDAQAAVKETKG. Disordered regions lie at residues 625-673 and 716-1413; these read SKHE…SRRD and IREY…ASSF. Basic and acidic residues-rich tracts occupy residues 639-656 and 716-745; these read KCRE…ERTY and IREY…RPIE. At S647 the chain carries Phosphoserine. Phosphoserine occurs at positions 747, 749, 758, and 762. A compositionally biased stretch (basic and acidic residues) spans 765 to 783; that stretch reads HSERLPSDSERRLYRRSSE. A compositionally biased stretch (low complexity) spans 784-794; that stretch reads RSGSCSSVSPP. A Phosphoserine modification is found at S792. Residues 795-842 are compositionally biased toward basic and acidic residues; sequence RYDKLEKARLERYTKNEKADKERTFDPERVERERRIVRKEKGEKDKAE. Residues 822–850 adopt a coiled-coil conformation; that stretch reads ERVERERRIVRKEKGEKDKAERQKRKGKA. Phosphoserine occurs at positions 852, 855, and 869. Basic and acidic residues-rich tracts occupy residues 863–894, 904–930, 947–975, and 1009–1071; these read ENDR…KNRL, RVKE…RDTT, AKSD…EGRT, and LKIE…KLER. S1077 and S1183 each carry phosphoserine. A compositionally biased stretch (basic and acidic residues) spans 1138 to 1227; that stretch reads GPEKEEVRKN…ERRSLVHEVG (90 aa). The stretch at 1185 to 1206 forms a coiled coil; that stretch reads RKQMEQSRRKQRMEMEIAKAEK. A phosphoserine mark is found at S1209, S1237, S1267, S1276, S1283, S1293, S1298, S1302, and S1348. The span at 1246–1272 shows a compositional bias: basic and acidic residues; that stretch reads DHVDFDICTKRERNYRSSRQISEDSER. Basic and acidic residues predominate over residues 1283 to 1292; that stretch reads SFHDDDDPRG. The span at 1351 to 1365 shows a compositional bias: basic and acidic residues; sequence EPSRWDPPMKQDPSR. Phosphoserine occurs at positions 1395 and 1397. A phosphothreonine mark is found at T1454 and T1456. Disordered stretches follow at residues 1494-1538 and 1557-2447; these read DKEK…QERQ and RLQH…ARFK. Residues 1509–1544 adopt a coiled-coil conformation; sequence YMKKKKIRTDSEGKLDDKKDERREEEQERQELFASR. 2 stretches are compositionally biased toward basic and acidic residues: residues 1516-1538 and 1557-1567; these read RTDS…QERQ and RLQHLERKSEE. A compositionally biased stretch (polar residues) spans 1582 to 1591; that stretch reads EGANSTSDSV. The span at 1601-1646 shows a compositional bias: basic and acidic residues; the sequence is RFMELTRMQQKEKEKDQKPKEAEKQEEPETHPKTPEPAAETKEPEP. The stretch at 1607 to 1627 forms a coiled coil; the sequence is RMQQKEKEKDQKPKEAEKQEE. T1634 is modified (phosphothreonine). Residues 1701-1710 are compositionally biased toward low complexity; the sequence is VSEPVSVPVE. The span at 1756–1765 shows a compositional bias: polar residues; that stretch reads PGTTVSQVES. A compositionally biased stretch (basic and acidic residues) spans 1782 to 1796; it reads QRSEEAEEGKVEKPD. The span at 1797–1810 shows a compositional bias: polar residues; it reads TTPSTEPDATQNAG. At T1844 the chain carries Phosphothreonine. 2 stretches are compositionally biased toward basic and acidic residues: residues 1857-1871 and 1879-1894; these read PVTR…EKLK and EAQK…EKIT. Phosphoserine occurs at positions 1915 and 1936. Over residues 1930–1943 the composition is skewed to basic and acidic residues; the sequence is TDHESRSPAKEPVE. T1965 is modified (phosphothreonine). The segment covering 1967–1976 has biased composition (basic residues); the sequence is RRGRPPKTRR. Basic and acidic residues-rich tracts occupy residues 1977–1991, 2039–2066, 2074–2084, and 2097–2106; these read RAEE…EPAE, GNPK…DKSG, VLERKPPEKTY, and GMDRAAHQRS. Residues S2128 and S2134 each carry the phosphoserine modification. Over residues 2129–2147 the composition is skewed to polar residues; it reads PQESESPQKGSGSSPQLAN. The tract at residues 2138-2462 is interaction with MSX2; it reads GSGSSPQLAN…ESDPVTPPSD (325 aa). Residue T2171 is modified to Phosphothreonine. Composition is skewed to low complexity over residues 2191-2212 and 2231-2242; these read EPSA…ASEE and AAAIGSIISDAS. The RID domain maps to 2216-2704; that stretch reads EHGHKPAHQA…NVLTGPVNVL (489 aa). Basic and acidic residues predominate over residues 2261 to 2274; the sequence is HPREGMEPGLHEAE. Residues 2281–2290 are compositionally biased toward polar residues; the sequence is GTATESSAPQ. The span at 2318–2329 shows a compositional bias: basic and acidic residues; it reads KGSKAEVTPPRK. The span at 2330–2345 shows a compositional bias: basic residues; that stretch reads DKGRQKTTRRRKRNAN. The segment covering 2359–2379 has biased composition (low complexity); that stretch reads AEQTQSESPAAEEATAATPEA. Residue S2366 is modified to Phosphoserine. T2419 carries the post-translational modification Phosphothreonine. A phosphoserine mark is found at S2450 and S2454. 4 disordered regions span residues 2453 to 2472, 2481 to 2528, 2745 to 2781, and 2829 to 2849; these read ESDP…TIPL, PVIP…MDTS, AAKG…GAGL, and SQVK…PQTP. T2458 is modified (phosphothreonine). Phosphoserine is present on S2491. The segment at 2706-2845 is interaction with RBPSUH; sequence TPVSATVGTV…ITPTQSAPKG (140 aa). T2913 and T2925 each carry phosphothreonine. The interval 2974-3023 is disordered; that stretch reads NHVPSGPSTPADRTIAHLATPKPDTHSPRPTGPTPGLFPRPCHPSSTTST. A compositionally biased stretch (pro residues) spans 3003-3015; sequence PTGPTPGLFPRPC. 2 positions are modified to asymmetric dimethylarginine: R3088 and R3096. Residues 3310–3473 are disordered; that stretch reads RTKTSAQVPP…QESSPHGTPQ (164 aa). The segment covering 3323-3340 has biased composition (low complexity); the sequence is PLQSTQSAQPAPSTQATQ. Residues 3366–3379 show a composition bias toward polar residues; that stretch reads QVSQEAKGTQTGGV. S3413 is subject to Phosphoserine. In terms of domain architecture, SPOC spans 3478 to 3644; it reads MVQLLKKYPI…PHLMIVIASV (167 aa).

This sequence belongs to the RRM Spen family. As to quaternary structure, interacts with NCOR2, HDAC1, HDAC2, RBBP4, MBD3 and MTA1L1. Interacts with the nuclear receptors RAR and PPARD. Interacts with RAR in absence of ligand. Binds to the steroid receptor RNA coactivator SRA. Interacts with MSX2. Interacts with RBPSUH; this interaction may prevent the interaction between RBPSUH and NOTCH1. Binds to HIPK3. In terms of tissue distribution, highly expressed in testis. Expressed at lower level in brain, lung, spleen, liver and kidney. Weakly expressed in cardiac and skeletal muscles and ovary. In spleen, it is expressed in follicular B-cells, while it is weakly expressed in marginal zone B-cells.

It is found in the nucleus. Its function is as follows. May serve as a nuclear matrix platform that organizes and integrates transcriptional responses. In osteoblasts, supports transcription activation: synergizes with RUNX2 to enhance FGFR2-mediated activation of the osteocalcin FGF-responsive element (OCFRE). Has also been shown to be an essential corepressor protein, which probably regulates different key pathways, such as the Notch pathway. Negative regulator of the Notch pathway via its interaction with RBPSUH, which prevents the association between NOTCH1 and RBPSUH, and therefore suppresses the transactivation activity of Notch signaling. Blocks the differentiation of precursor B-cells into marginal zone B-cells. Probably represses transcription via the recruitment of large complexes containing histone deacetylase proteins. May bind both to DNA and RNA. The sequence is that of Msx2-interacting protein (Spen) from Mus musculus (Mouse).